Reading from the N-terminus, the 246-residue chain is MNILLSNDDGYHAEGIQTLATYLRKFANVVIVAPDRNRSAASSSLTLVEPLRPRQLDNRDYCINGTPADCVHLALNGFLSGRVDLVVSGINAGVNLGDDTLYSGTLAAALEGRHLGLPAIAVSLDGRQHYESAAKIVCDLIPKLHGQLLKSREILNINVPDLPYENLKGLKVCRLGHRSSAAEVIKQADPRGEAIYWIGPAGLPEDEAEGTDFHAVQQGYVSITPIQPDLTAHHSLRSLQTWLEQE.

4 residues coordinate a divalent metal cation: aspartate 8, aspartate 9, serine 39, and asparagine 91.

Belongs to the SurE nucleotidase family. It depends on a divalent metal cation as a cofactor.

The protein localises to the cytoplasm. It carries out the reaction a ribonucleoside 5'-phosphate + H2O = a ribonucleoside + phosphate. Nucleotidase that shows phosphatase activity on nucleoside 5'-monophosphates. This Actinobacillus succinogenes (strain ATCC 55618 / DSM 22257 / CCUG 43843 / 130Z) protein is 5'-nucleotidase SurE.